Reading from the N-terminus, the 170-residue chain is Adenine phosphoribosyltransferase (170 aa).

It belongs to the purine/pyrimidine phosphoribosyltransferase family. As to quaternary structure, homodimer.

The protein resides in the cytoplasm. It catalyses the reaction AMP + diphosphate = 5-phospho-alpha-D-ribose 1-diphosphate + adenine. Its pathway is purine metabolism; AMP biosynthesis via salvage pathway; AMP from adenine: step 1/1. In terms of biological role, catalyzes a salvage reaction resulting in the formation of AMP, that is energically less costly than de novo synthesis. In Trichodesmium erythraeum (strain IMS101), this protein is Adenine phosphoribosyltransferase.